A 346-amino-acid chain; its full sequence is DNA repair protein XRCC3 (346 aa).

The residue at position 1 (methionine 1) is an N-acetylmethionine. Glycine 107–threonine 114 is an ATP binding site.

Belongs to the RecA family. RAD51 subfamily. In terms of assembly, interacts with RAD51C and RAD51. Part of the CX3 complex consisting of RAD51C and XRCC3; the complex has a ring-like structure arranged into a flat disk around a central channel; CX3 can interact with RAD51 in vitro. Forms a complex with FANCD2, BRCA2 and phosphorylated FANCG. Interacts with SWSAP1 and ZSWIM7; involved in homologous recombination repair. Interacts directly with PALB2 which may serve as a scaffold for a HR complex containing PALB2, BRCA2, RAD51C, RAD51 and XRCC3.

It is found in the nucleus. The protein localises to the cytoplasm. It localises to the perinuclear region. The protein resides in the mitochondrion. In terms of biological role, involved in the homologous recombination repair (HRR) pathway of double-stranded DNA, thought to repair chromosomal fragmentation, translocations and deletions. Part of the RAD51 paralog protein complex CX3 which acts in the BRCA1-BRCA2-dependent HR pathway. Upon DNA damage, CX3 acts downstream of RAD51 recruitment; the complex binds predominantly to the intersection of the four duplex arms of the Holliday junction (HJ) and to junctions of replication forks. Involved in HJ resolution and thus in processing HR intermediates late in the DNA repair process; the function may be linked to the CX3 complex and seems to involve GEN1 during mitotic cell cycle progression. Part of a PALB2-scaffolded HR complex containing BRCA2 and RAD51C and which is thought to play a role in DNA repair by HR. Plays a role in regulating mitochondrial DNA copy number under conditions of oxidative stress in the presence of RAD51 and RAD51C. The protein is DNA repair protein XRCC3 (XRCC3) of Homo sapiens (Human).